The primary structure comprises 283 residues: Circadian clock oscillator protein KaiA (283 aa).

The tract at residues 1-146 (MAQSTALTIC…LFRLPALKES (146 aa)) is psR domain, not required to form KaiA:KaiB:KaiC complex, or for a full KaiC phosphorylation cycle. Positions 3–163 (QSTALTICGL…RLSQKLKERL (161 aa)) constitute a KaiA N-terminal domain. The segment at 164–172 (GYLGVYYKR) is flexible linker. Residues 173–281 (DTAFFFRRMS…CEMYRRSIPR (109 aa)) enclose the KaiA C-terminal domain.

Belongs to the KaiA family. In terms of assembly, homodimer. The KaiABC complex composition changes during the circadian cycle to control KaiC phosphorylation. Complexes KaiC(6), KaiA(2-4):KaiC(6), KaiB(6):KaiC(6) and KaiC(6):KaiB(6):KaiA(12) are among the most important forms, many form cooperatively. Binds to KaiB and KaiC, the N-terminus (pseudoreceiver domain PsR) is not required for either interaction. 1 KaiB binds to one subunit of the KaiA homodimer. KaiA and CikA bind to the same region of the KaiB(fs) form and therefore compete.

Key component of the KaiABC oscillator complex, which constitutes the main circadian regulator in cyanobacteria. Complex composition changes during the circadian cycle to control KaiC phosphorylation. KaiA stimulates KaiC autophosphorylation, while KaiB sequesters KaiA, leading to KaiC autodephosphorylation. KaiA binding to the KaiC CII domain during the subjective day yields KaiA(2-4):KaiC(6) complexes which stimulate KaiC autophosphorylation. Phospho-Ser-431 KaiC accumulation triggers binding of KaiB during the subjective night to form the KaiB(6):KaiC(6) complex, leading to changes in the output regulators CikA and SasA. KaiB(6):KaiC(6) formation exposes a site for KaiA binding on KaiB that sequesters KaiA from KaiC's CII domain, making the KaiC(6):KaiB(6):KaiA(12) complex resulting in KaiC autodephosphorylation. Complete dephosphorylation of KaiC leads to dissociation of KaiA(2):KaiB(1), completing 1 cycle of the Kai oscillator. Formation of the KaiB:KaiC complex is promoted by KaiA, helping switch KaiC from its autophosphorylation to autodephosphatase function. In terms of biological role, binds oxidized quinones via the N-terminal PsR domain, allowing it to sense redox changes and possibly mediate clock input. This chain is Circadian clock oscillator protein KaiA, found in Thermosynechococcus vestitus (strain NIES-2133 / IAM M-273 / BP-1).